Reading from the N-terminus, the 334-residue chain is 6-phosphogluconolactonase (334 aa).

Belongs to the cycloisomerase 2 family.

The enzyme catalyses 6-phospho-D-glucono-1,5-lactone + H2O = 6-phospho-D-gluconate + H(+). Its pathway is carbohydrate degradation; pentose phosphate pathway; D-ribulose 5-phosphate from D-glucose 6-phosphate (oxidative stage): step 2/3. Its function is as follows. Catalyzes the hydrolysis of 6-phosphogluconolactone to 6-phosphogluconate. The polypeptide is 6-phosphogluconolactonase (Yersinia pseudotuberculosis serotype O:1b (strain IP 31758)).